The chain runs to 260 residues: Protein SVS1 (260 aa).

A signal peptide spans 1–19 (MIFKILCSLLLVTSNFASA). N-linked (GlcNAc...) asparagine glycosylation is found at Asn23, Asn249, and Asn256.

Required for vanadate resistance. In Saccharomyces cerevisiae (strain ATCC 204508 / S288c) (Baker's yeast), this protein is Protein SVS1 (SVS1).